The chain runs to 360 residues: MYINQQKKSFFNKKRIILSSIVVLFLIIGGAFLYGKSLLEPVEKDSKTTVNINIPSGSSVSAIASILKKNDVIKSEKAFQYYVKYKGASGFQAGFYHLNKGMDLDAIIQKLTSGATGYAFQITVTEGAQLTQIAAAIADETKYSKKQVIAKLDDETFINQLKKEFPDTVTNDVFNKNIKHPLEGYLFPATYPFNDPDTSLEDIIKAMIKQTNSYVETYKSEMKKNKVSVHKLLTMASLIEEEATEKADRHKIASVFYNRLKKKMPLQTDPTVLYAAGKHKDRVLYKDLEIDSPYNTYKNTGLTPGPIANAGMSSWEAALHPDKTDYLYFLAKSNGEVVFTKTLKEHNKAKEKYISSKNEK.

Residues 16 to 36 (IILSSIVVLFLIIGGAFLYGK) form a helical membrane-spanning segment.

The protein belongs to the transglycosylase MltG family.

It is found in the cell membrane. It carries out the reaction a peptidoglycan chain = a peptidoglycan chain with N-acetyl-1,6-anhydromuramyl-[peptide] at the reducing end + a peptidoglycan chain with N-acetylglucosamine at the non-reducing end.. Functions as a peptidoglycan terminase that cleaves nascent peptidoglycan strands endolytically to terminate their elongation. The chain is Endolytic murein transglycosylase from Bacillus subtilis (strain 168).